A 1218-amino-acid polypeptide reads, in one-letter code: Sodium bicarbonate cotransporter 3 (1218 aa).

2 disordered regions span residues 1-31 (MEAD…KTSS) and 53-99 (HVPF…SQRV). At 1-612 (MEADGAGEQM…DFKDALSLQC (612 aa)) the chain is on the extracellular side. Residues serine 57, serine 60, serine 89, and serine 155 each carry the phosphoserine modification. The segment covering 60-77 (SRRRHRHRGHKHHHRRRK) has biased composition (basic residues). The span at 78-90 (DKDSDKEDGRESP) shows a compositional bias: basic and acidic residues. Asparagine 176 is a glycosylation site (N-linked (GlcNAc...) asparagine). Phosphoserine occurs at positions 238, 247, and 263. The N-linked (GlcNAc...) asparagine glycan is linked to asparagine 274. Disordered stretches follow at residues 294–350 (SRAG…DIPR), 364–412 (KGQE…ENST), and 536–577 (SIRI…HAGP). Over residues 308–318 (VPTPQNSPPSS) the composition is skewed to pro residues. Low complexity predominate over residues 319 to 337 (PSLSRLTSRSSQQTQPQAP). Over residues 383–396 (SPQSAPGNLDSSKS) the composition is skewed to polar residues. Residues serine 386, serine 404, and serine 407 each carry the phosphoserine modification. The N-linked (GlcNAc...) asparagine glycan is linked to asparagine 410. Serine 411 and serine 560 each carry phosphoserine. Over residues 567-576 (PPKEADHHAG) the composition is skewed to basic and acidic residues. Residues 613-633 (LASILFLYCACMSPVITFGGL) traverse the membrane as a helical segment. Residues 634–641 (LGEATEGR) lie on the Cytoplasmic side of the membrane. The helical transmembrane segment at 642 to 662 (ISAIESLFGASLTGIAYSLFA) threads the bilayer. At 663–699 (GQPLTILGSTGPVLVFEKILFKFCRDYHLSYLSLRTS) the chain is on the extracellular side. A helical transmembrane segment spans residues 700 to 720 (IGLWTSFLCIVLVATDASSLV). The Cytoplasmic segment spans residues 721–729 (CYITRFTEE). The helical transmembrane segment at 730–750 (AFAALICIIFIYEALEKLFHL) threads the bilayer. Topologically, residues 751–821 (GEIYAFNMHN…MFVGSACGPH (71 aa)) are extracellular. Cysteine 770 and cysteine 772 form a disulfide bridge. N-linked (GlcNAc...) asparagine glycans are attached at residues asparagine 780, asparagine 790, and asparagine 800. Cysteine 806 and cysteine 818 are disulfide-bonded. The chain crosses the membrane as a helical span at residues 822-842 (GPYVPDVLFWCVVLFFTTFFL). Topologically, residues 843-865 (SSFLKQFKTKRYFPTKVRSTISD) are cytoplasmic. Residues 866-886 (FAVFLTIVIMVAIDYLVGIPS) traverse the membrane as a helical segment. The Extracellular segment spans residues 887–912 (PKLHVPEKFEPTDPSRGWIISPLGDN). Residues 913 to 933 (PWWTLLIAAVPALLCTILIFM) form a helical membrane-spanning segment. Residues 934 to 958 (DQQITAVIINRKEHKLKKGAGYHLD) lie on the Cytoplasmic side of the membrane. A helical membrane pass occupies residues 959–979 (LLMVAVMLGVCSIMGLPWFVA). Over 980–1015 (ATVLSISHVNSLKVESECSAPGEQPKFLGIREQRVT) the chain is Extracellular. The tract at residues 1012-1135 (QRVTGLMIFI…MDLCFTKREL (124 aa)) is essential for cell membrane localization and transport activity. A helical transmembrane segment spans residues 1016-1036 (GLMIFILMGLSVFMTSVLKFI). The Cytoplasmic segment spans residues 1037–1038 (PM). The chain crosses the membrane as a helical span at residues 1039–1059 (PVLYGVFLYMGVSSLKGIQFF). The Extracellular portion of the chain corresponds to 1060 to 1096 (DRIKLFGMPAKHQPDLIYLRYVPLWKVHVFTVVQLTC). 2 positions are modified to phosphoserine: methionine 1067 and leucine 1078. Residues 1097-1117 (LVLLWVIKASAAAVVFPMMVL) form a helical membrane-spanning segment. An essential for interaction with RACK1 region spans residues 1118-1140 (ALVFVRKLMDLCFTKRELSWLDD). The Cytoplasmic segment spans residues 1118 to 1218 (ALVFVRKLMD…KKYMDAETSL (101 aa)). A CA2-binding region spans residues 1138–1140 (LDD). A compositionally biased stretch (basic and acidic residues) spans 1148–1165 (KKEDDKKKKEKEEAERML). The disordered stretch occupies residues 1148–1172 (KKEDDKKKKEKEEAERMLQGDGDTV). Threonine 1171 carries the post-translational modification Phosphothreonine. 4 positions are modified to phosphoserine: serine 1180, threonine 1188, isoleucine 1201, and serine 1217. Positions 1215–1218 (ETSL) match the PDZ-binding motif.

This sequence belongs to the anion exchanger (TC 2.A.31) family. In terms of assembly, interacts with USH1C. Forms a complex with ATP6V1B1 and NHERF1/EBP50. Interacts in a pH dependent-manner with CA2/carbonic anhydrase 2. Interacts with CFTR probably through NHERF1/EBP50. As to quaternary structure, interacts with RACK1. Undergoes lysosome-mediated degradation. Post-translationally, N-glycosylated. As to expression, expressed in aorta, ventricles, atrium, mesenteric artery, kidney, spleen, duodenum, jejunum, ileum, colon, lung, trachea, gastric fundus and pylorus, cerebrum, cerebellum, pancreas, liver, parotid gland, and epididymis. Expressed in the inner ear by cochlear outer and inner hair cells (at protein level). Highly expressed in testis and spleen. Specifically expressed in kidney. In terms of tissue distribution, specifically expressed in hippocampal neurons.

The protein localises to the basolateral cell membrane. It localises to the apical cell membrane. It is found in the cell projection. The protein resides in the stereocilium. Its subcellular location is the cell membrane. The enzyme catalyses hydrogencarbonate(in) + Na(+)(in) = hydrogencarbonate(out) + Na(+)(out). Insensitive to stilbene derivatives. In terms of biological role, electroneutral sodium- and bicarbonate-dependent cotransporter with a Na(+):HCO3(-) 1:1 stoichiometry. Mediates the sodium-dependent bicarbonate transport important for pH recovery after acid load as well as for regulation of steady-state pH in the duodenum and vascular smooth muscle cells. Plays a key role in macrophage acidification, mediating bicarbonate import into the cytoplasm which is crucial for net acid extrusion and maintenance of cytoplasmic pH during phagocytosis. Provides cellular bicarbonate for de novo purine and pyrimidine synthesis and is a key mediator of de novo nucleotide synthesis downstream of mTORC1 signaling in proliferating cells. The protein is Sodium bicarbonate cotransporter 3 (Slc4a7) of Rattus norvegicus (Rat).